A 1343-amino-acid chain; its full sequence is MVYSYSEKKRIRKDFGKRPKVLDIPYLLSIQLDSFKKFTDQDPTGERGLEAAFRSVFPIKSFSGNSELQYVSYKLGEPVFDVKECQIRGVTYSAPLRVKLRMVLYDREAAAGTVKDIKEQEVYMGDIPLMTDNGTFVINGTERVIVSQLHRSPGVFFDHDRGKTHSSGKVLYNARIIPYRGSWLDFEFDPKDALFVRIDRRRKLPATIMLRALEYSTQEILDLFFERVEFKIKKDTLVMALVPERLRGETASYDIKDAEGSVLVEAGRRITARHIRQLEKTNTTELEVPVEYIVGKYAAQDYIDPDTGEVLVSANSEISLEDLAKLSLAGIKELSTLYINELDHGAYISDTLRIDSTTNRLEALVEIYRMMRPGEPPTKDAAEALFQNLFFSEERYDLSKVGRMKFNRRLSIPDDEGSGVLSKEDIVAVMKNIIHIRNGFDEVDDIDHLGNRRIRSVGEMAENQFRVGLVRVERAVRERLSLGDLNELMPQDLINAKPISAAVKEFFGSSQLSQFMDQNNPLSEVTHKRRISALGPGGLTRERAGFEVRDVHPTHYGRLCPIETPEGPNIGLINSLASFARTNSYGFLETPYRKVIDGVITDEVEYLSAIEEGRYVIAQANIEIDANGRMAEEQIACRHKGESTFMRAADIQYMDVSPQQIISVAASLIPFLEHDDANRALMGANMQRQAVPTLRSEKPLVGTGIERTLAVDSGVVVVAKRGGFVDYVDASRIVVKVNEDELRPGEAGIDIYNLTKYTRSNQNTCINQRPCCSVGEPVVRGDVLADGPSTDLGDLALGQNMRIAFMPWNGYNFEDSILISERVAQEDRFTTIHIQELSCIARDTKLGSEEITADIPNVGESALSKLDESGIVYIGAEVKGGDILVGKVTPKGETQLTPEEKLLRAIFGEKASDVKDSSLRVPNSVKGTIIDVQVFTRDGVEKDKRAVEIEEMHIAQARKDLGEEFKILEEGVLSRARNLLIGAGFSDAQIAALPRKDVLIQVIDDETKQTELEQLAEQHEELKADFDKKFEIKRRKITQGDDLAPGVLKIVKVYLAVKRTIQPGDKMAGRHGNKGVISKICPIEDMPYDEQGNPVDIVLNPLGVPSRMNIGQVLEVHMGAAAKGIGNKITAMLEEQRELAEVRGYIKQVYELGDEVQQRVDIDSFTDDEVLRLATNLKGGIPIATPAFDGAKEKEIKQMLELAGLPTSGQLKLFDGRTGNEFERQVTVGYMYMLKLNHLVDDKMHARSTGSYSLVTQQPLGGKAQFGGQRFGEMEVWALEAYGAAYTLQEMLTVKSDDVNGRTQMYKNIVDGNHQMQPGMPESFNVLLKEIRSLGINIELDQA.

This sequence belongs to the RNA polymerase beta chain family. The RNAP catalytic core consists of 2 alpha, 1 beta, 1 beta' and 1 omega subunit. When a sigma factor is associated with the core the holoenzyme is formed, which can initiate transcription.

The catalysed reaction is RNA(n) + a ribonucleoside 5'-triphosphate = RNA(n+1) + diphosphate. Functionally, DNA-dependent RNA polymerase catalyzes the transcription of DNA into RNA using the four ribonucleoside triphosphates as substrates. This Shewanella baltica (strain OS223) protein is DNA-directed RNA polymerase subunit beta.